The chain runs to 57 residues: Large ribosomal subunit protein uL30 (57 aa).

This sequence belongs to the universal ribosomal protein uL30 family. As to quaternary structure, part of the 50S ribosomal subunit.

The sequence is that of Large ribosomal subunit protein uL30 from Clostridium perfringens (strain ATCC 13124 / DSM 756 / JCM 1290 / NCIMB 6125 / NCTC 8237 / Type A).